Consider the following 379-residue polypeptide: Homoserine O-succinyltransferase (379 aa).

The AB hydrolase-1 domain occupies 48–357 (NAVLICHALS…SAHGHDAFLM (310 aa)). Ser154 serves as the catalytic Nucleophile. Residue Arg224 participates in substrate binding. Active-site residues include Asp319 and His352. Position 353 (Asp353) interacts with substrate.

Belongs to the AB hydrolase superfamily. MetX family. As to quaternary structure, homodimer.

The protein localises to the cytoplasm. The enzyme catalyses L-homoserine + succinyl-CoA = O-succinyl-L-homoserine + CoA. It participates in amino-acid biosynthesis; L-methionine biosynthesis via de novo pathway; O-succinyl-L-homoserine from L-homoserine: step 1/1. In terms of biological role, transfers a succinyl group from succinyl-CoA to L-homoserine, forming succinyl-L-homoserine. This chain is Homoserine O-succinyltransferase, found in Neisseria gonorrhoeae (strain ATCC 700825 / FA 1090).